We begin with the raw amino-acid sequence, 478 residues long: Geranial dehydrogenase (478 aa).

Gly230–Gly235 serves as a coordination point for NAD(+). The active-site Proton acceptor is the Glu252. Cys286 (nucleophile) is an active-site residue.

This sequence belongs to the aldehyde dehydrogenase family.

It carries out the reaction (2E)-geranial + NAD(+) + H2O = geranate + NADH + 2 H(+). The enzyme catalyses perillyl aldehyde + NAD(+) + H2O = perillate + NADH + 2 H(+). It participates in terpene metabolism; monoterpene degradation. Involved in the degradation of the monoterpenes beta-myrcene and limonene. During anaerobic degradation of beta-myrcene, catalyzes the NAD(+)-dependent oxidation of geranial to geranic acid. Seems to be specific for the trans-isomer geranial, since it does not act on the cis-isomer neral. During degradation of limonene, catalyzes the NAD(+)-dependent conversion of perillyl aldehyde to perrilic acid. This is Geranial dehydrogenase from Castellaniella defragrans (strain DSM 12143 / CCUG 39792 / 65Phen) (Alcaligenes defragrans).